The following is a 374-amino-acid chain: Methylthioribose-1-phosphate isomerase (374 aa).

Aspartate 251 serves as the catalytic Proton donor.

It belongs to the eIF-2B alpha/beta/delta subunits family. MtnA subfamily.

It is found in the cytoplasm. The protein resides in the nucleus. It carries out the reaction 5-(methylsulfanyl)-alpha-D-ribose 1-phosphate = 5-(methylsulfanyl)-D-ribulose 1-phosphate. It participates in amino-acid biosynthesis; L-methionine biosynthesis via salvage pathway; L-methionine from S-methyl-5-thio-alpha-D-ribose 1-phosphate: step 1/6. Catalyzes the interconversion of methylthioribose-1-phosphate (MTR-1-P) into methylthioribulose-1-phosphate (MTRu-1-P). This is Methylthioribose-1-phosphate isomerase from Oryza sativa subsp. indica (Rice).